Reading from the N-terminus, the 702-residue chain is Polyribonucleotide nucleotidyltransferase (702 aa).

Mg(2+) is bound by residues Asp484 and Asp490. The KH domain maps to 551–610 (PHIESFKIAVEKIGALIGPGGKTVKSLSDQYRVTINTDSDGTVTVSGRDAQSVFDAKVAV). In terms of domain architecture, S1 motif spans 620–688 (GRVYQGVVKR…RMGRLNLSYI (69 aa)).

Belongs to the polyribonucleotide nucleotidyltransferase family. Requires Mg(2+) as cofactor.

The protein localises to the cytoplasm. The enzyme catalyses RNA(n+1) + phosphate = RNA(n) + a ribonucleoside 5'-diphosphate. Its function is as follows. Involved in mRNA degradation. Catalyzes the phosphorolysis of single-stranded polyribonucleotides processively in the 3'- to 5'-direction. In Treponema pallidum (strain Nichols), this protein is Polyribonucleotide nucleotidyltransferase.